A 512-amino-acid polypeptide reads, in one-letter code: Cytochrome P450 1A1 (512 aa).

The tract at residues 29–40 is mitochondrial targeting signal; that stretch reads SRPRVPKGLKNP. Residue Ser-67 is glycosylated (O-linked (GlcNAc) serine). Residue Phe-224 participates in substrate binding. Position 457 (Cys-457) interacts with heme.

The protein belongs to the cytochrome P450 family. In terms of assembly, interacts with cytosolic chaperones HSP70 and HSP90; this interaction is required for initial targeting to mitochondria. Interacts (via mitochondrial targeting signal) with TOMM40 (via N-terminus); this interaction is required for translocation across the mitochondrial outer membrane. The cofactor is heme.

The protein localises to the endoplasmic reticulum membrane. It localises to the mitochondrion inner membrane. It is found in the microsome membrane. Its subcellular location is the cytoplasm. The enzyme catalyses an organic molecule + reduced [NADPH--hemoprotein reductase] + O2 = an alcohol + oxidized [NADPH--hemoprotein reductase] + H2O + H(+). The catalysed reaction is estrone + reduced [NADPH--hemoprotein reductase] + O2 = 2-hydroxyestrone + oxidized [NADPH--hemoprotein reductase] + H2O + H(+). It catalyses the reaction estrone + reduced [NADPH--hemoprotein reductase] + O2 = 4-hydroxyestrone + oxidized [NADPH--hemoprotein reductase] + H2O + H(+). It carries out the reaction estrone + reduced [NADPH--hemoprotein reductase] + O2 = 6alpha-hydroxyestrone + oxidized [NADPH--hemoprotein reductase] + H2O + H(+). The enzyme catalyses estrone + reduced [NADPH--hemoprotein reductase] + O2 = 15alpha-hydroxyestrone + oxidized [NADPH--hemoprotein reductase] + H2O + H(+). The catalysed reaction is estrone + reduced [NADPH--hemoprotein reductase] + O2 = 16alpha-hydroxyestrone + oxidized [NADPH--hemoprotein reductase] + H2O + H(+). It catalyses the reaction 17beta-estradiol + reduced [NADPH--hemoprotein reductase] + O2 = 2-hydroxy-17beta-estradiol + oxidized [NADPH--hemoprotein reductase] + H2O + H(+). It carries out the reaction 17beta-estradiol + reduced [NADPH--hemoprotein reductase] + O2 = 4-hydroxy-17beta-estradiol + oxidized [NADPH--hemoprotein reductase] + H2O + H(+). The enzyme catalyses 17beta-estradiol + reduced [NADPH--hemoprotein reductase] + O2 = 6alpha-hydroxy-17beta-estradiol + oxidized [NADPH--hemoprotein reductase] + H2O + H(+). The catalysed reaction is 17beta-estradiol + reduced [NADPH--hemoprotein reductase] + O2 = 7alpha-hydroxy-17beta-estradiol + oxidized [NADPH--hemoprotein reductase] + H2O + H(+). It catalyses the reaction 17beta-estradiol + reduced [NADPH--hemoprotein reductase] + O2 = 15alpha-hydroxy-17beta-estradiol + oxidized [NADPH--hemoprotein reductase] + H2O + H(+). It carries out the reaction (5Z,8Z,11Z)-eicosatrienoate + reduced [NADPH--hemoprotein reductase] + O2 = 19-hydroxy-(5Z,8Z,11Z)-eicosatrienoate + oxidized [NADPH--hemoprotein reductase] + H2O + H(+). The enzyme catalyses (5Z,8Z,11Z,14Z)-eicosatetraenoate + reduced [NADPH--hemoprotein reductase] + O2 = 16-hydroxy-(5Z,8Z,11Z,14Z)-eicosatetraenoate + oxidized [NADPH--hemoprotein reductase] + H2O + H(+). The catalysed reaction is (5Z,8Z,11Z,14Z)-eicosatetraenoate + reduced [NADPH--hemoprotein reductase] + O2 = 17-hydroxy-(5Z,8Z,11Z,14Z)-eicosatetraenoate + oxidized [NADPH--hemoprotein reductase] + H2O + H(+). It catalyses the reaction (5Z,8Z,11Z,14Z)-eicosatetraenoate + reduced [NADPH--hemoprotein reductase] + O2 = 18-hydroxy-(5Z,8Z,11Z,14Z)-eicosatetraenoate + oxidized [NADPH--hemoprotein reductase] + H2O + H(+). It carries out the reaction (5Z,8Z,11Z,14Z)-eicosatetraenoate + reduced [NADPH--hemoprotein reductase] + O2 = 19-hydroxy-(5Z,8Z,11Z,14Z)-eicosatetraenoate + oxidized [NADPH--hemoprotein reductase] + H2O + H(+). The enzyme catalyses (5Z,8Z,11Z,14Z,17Z)-eicosapentaenoate + reduced [NADPH--hemoprotein reductase] + O2 = 19-hydroxy-(5Z,8Z,11Z,14Z,17Z)-eicosapentaenoate + oxidized [NADPH--hemoprotein reductase] + H2O + H(+). The catalysed reaction is (5Z,8Z,11Z,14Z)-eicosatetraenoate + reduced [NADPH--hemoprotein reductase] + O2 = (8R,9S)-epoxy-(5Z,11Z,14Z)-eicosatrienoate + oxidized [NADPH--hemoprotein reductase] + H2O + H(+). It catalyses the reaction (5Z,8Z,11Z,14Z)-eicosatetraenoate + reduced [NADPH--hemoprotein reductase] + O2 = (11R,12S)-epoxy-(5Z,8Z,14Z)-eicosatrienoate + oxidized [NADPH--hemoprotein reductase] + H2O + H(+). It carries out the reaction (5Z,8Z,11Z,14Z)-eicosatetraenoate + reduced [NADPH--hemoprotein reductase] + O2 = (14S,15R)-epoxy-(5Z,8Z,11Z)-eicosatrienoate + oxidized [NADPH--hemoprotein reductase] + H2O + H(+). The enzyme catalyses (5Z,8Z,11Z,14Z)-eicosatetraenoate + reduced [NADPH--hemoprotein reductase] + O2 = (14R,15S)-epoxy-(5Z,8Z,11Z)-eicosatrienoate + oxidized [NADPH--hemoprotein reductase] + H2O + H(+). The catalysed reaction is (5Z,8Z,11Z,14Z,17Z)-eicosapentaenoate + reduced [NADPH--hemoprotein reductase] + O2 = (17R,18S)-epoxy-(5Z,8Z,11Z,14Z)-eicosatetraenoate + oxidized [NADPH--hemoprotein reductase] + H2O + H(+). It catalyses the reaction (4Z,7Z,10Z,13Z,16Z,19Z)-docosahexaenoate + reduced [NADPH--hemoprotein reductase] + O2 = (19S,20R)-epoxy-(4Z,7Z,10Z,13Z,16Z)-docosapentaenoate + oxidized [NADPH--hemoprotein reductase] + H2O + H(+). It carries out the reaction (4Z,7Z,10Z,13Z,16Z,19Z)-docosahexaenoate + reduced [NADPH--hemoprotein reductase] + O2 = (19R,20S)-epoxy-(4Z,7Z,10Z,13Z,16Z)-docosapentaenoate + oxidized [NADPH--hemoprotein reductase] + H2O + H(+). The enzyme catalyses all-trans-retinol + reduced [NADPH--hemoprotein reductase] + O2 = all-trans-retinal + oxidized [NADPH--hemoprotein reductase] + 2 H2O + H(+). The catalysed reaction is all-trans-retinal + reduced [NADPH--hemoprotein reductase] + O2 = all-trans-retinoate + oxidized [NADPH--hemoprotein reductase] + H2O + 2 H(+). It catalyses the reaction (13S)-hydroperoxy-(9Z,11E)-octadecadienoate = 13-oxo-(9Z,11E)-octadecadienoate + H2O. It carries out the reaction (12S)-hydroperoxy-(5Z,8Z,10E,14Z)-eicosatetraenoate = 12-oxo-(5Z,8Z,10E,14Z)-eicosatetraenoate + H2O. The enzyme catalyses (15S)-hydroperoxy-(5Z,8Z,11Z,13E)-eicosatetraenoate = 15-oxo-(5Z,8Z,11Z,13E)-eicosatetraenoate + H2O. The catalysed reaction is (5S)-hydroperoxy-(6E,8Z,11Z,14Z)-eicosatetraenoate = 5-oxo-(6E,8Z,11Z,14Z)-eicosatetraenoate + H2O. The protein operates within steroid hormone biosynthesis. It functions in the pathway lipid metabolism; fatty acid metabolism. It participates in cofactor metabolism; retinol metabolism. A cytochrome P450 monooxygenase involved in the metabolism of various endogenous substrates, including fatty acids, steroid hormones and vitamins. Mechanistically, uses molecular oxygen inserting one oxygen atom into a substrate, and reducing the second into a water molecule, with two electrons provided by NADPH via cytochrome P450 reductase (CPR; NADPH-ferrihemoprotein reductase). Catalyzes the hydroxylation of carbon-hydrogen bonds. Exhibits high catalytic activity for the formation of hydroxyestrogens from estrone (E1) and 17beta-estradiol (E2), namely 2-hydroxy E1 and E2, as well as D-ring hydroxylated E1 and E2 at the C15alpha and C16alpha positions. Displays different regioselectivities for polyunsaturated fatty acids (PUFA) hydroxylation. Catalyzes the epoxidation of double bonds of certain PUFA. Converts arachidonic acid toward epoxyeicosatrienoic acid (EET) regioisomers, 8,9-, 11,12-, and 14,15-EET, that function as lipid mediators in the vascular system. Displays an absolute stereoselectivity in the epoxidation of eicosapentaenoic acid (EPA) producing the 17(R),18(S) enantiomer. May play an important role in all-trans retinoic acid biosynthesis in extrahepatic tissues. Catalyzes two successive oxidative transformation of all-trans retinol to all-trans retinal and then to the active form all-trans retinoic acid. May also participate in eicosanoids metabolism by converting hydroperoxide species into oxo metabolites (lipoxygenase-like reaction, NADPH-independent). This chain is Cytochrome P450 1A1 (CYP1A1), found in Macaca fascicularis (Crab-eating macaque).